Consider the following 122-residue polypeptide: Immunoglobulin lambda variable 8-61 (122 aa).

Positions M1–S24 are cleaved as a signal peptide. Residues Q25–S49 form a framework-1 region. Positions Q25–I122 constitute an Ig-like domain. Cysteines 46 and 114 form a disulfide. The interval S50–Y58 is complementarity-determining-1. Residues P59–Y75 are framework-2. A complementarity-determining-2 region spans residues S76 to N78. Residues T79–C114 form a framework-3 region. The segment at V115–I122 is complementarity-determining-3.

As to quaternary structure, immunoglobulins are composed of two identical heavy chains and two identical light chains; disulfide-linked.

It is found in the secreted. It localises to the cell membrane. In terms of biological role, v region of the variable domain of immunoglobulin light chains that participates in the antigen recognition. Immunoglobulins, also known as antibodies, are membrane-bound or secreted glycoproteins produced by B lymphocytes. In the recognition phase of humoral immunity, the membrane-bound immunoglobulins serve as receptors which, upon binding of a specific antigen, trigger the clonal expansion and differentiation of B lymphocytes into immunoglobulins-secreting plasma cells. Secreted immunoglobulins mediate the effector phase of humoral immunity, which results in the elimination of bound antigens. The antigen binding site is formed by the variable domain of one heavy chain, together with that of its associated light chain. Thus, each immunoglobulin has two antigen binding sites with remarkable affinity for a particular antigen. The variable domains are assembled by a process called V-(D)-J rearrangement and can then be subjected to somatic hypermutations which, after exposure to antigen and selection, allow affinity maturation for a particular antigen. This Homo sapiens (Human) protein is Immunoglobulin lambda variable 8-61.